The chain runs to 2279 residues: MYRSSARSSVSSHRPKDDGGGGPRSGRSSGSSSGPARRSSPPPPPSGSSSRTPARRPRSPSGHRGRRASPSPPRGRRVSPSPPRARRGSPSPPRGRRLFPPGPAGFRGSSRGESRADYARDGRGDHPGDSGSRRRSPGLCSDSLEKSLRITVGNDHFCVSTPERRRLSDRLGSPVDNLEDMDRDDLTDDSVFTRSSQCSRGLERYISQEEGPLSPFLGQLDEDYRTKETFLHRSDYSPHISCHDELLRGTERNREKLKGYSIRSEERSREAKRPRYDDTVKINSMGGDHPSFTSGTRNYRQRRRSPSPRFLDPEFRELDLARRKREEEEERSRSLSQELVGVDGGGTGCSIPGLSGVLTASEPGYSLHRPEEVSVMPKKSILKKRIEVDIMEPSMQLESFSSSTSSSQDHPLYSGHPSLPLSGAIAAFASEIENKGTMVETALKEPQGNLYQWGPLPGIPKDNSPLREKFGSFLCHKDNLDLKAEGPERHTDFLLPHERASQDGSGFSRILSMLADSTSTQEKRRRSFPDIEDEEKFLYGDEEEDLKAESVPKPLGSSESEVMRQKASSLPSSAPAVKLESLEETNPEYAKIHDLLKTIGLDIGVAEISQLAARTQERLHGKKPSLRSSADRRSSVDRYFSADHCSSVDHRFSADRCSSVDHCFSADRRSSDPHRLESREAHHSNTHSPEVSHPHPPSPVDPYLLTKNSPPFLKSDHPVGHISGPEVVGSGFQSSVAVRCMLPSAPSAPIRLPHTAALSQFHMPRASQFAAARIPPNYQGPAIPPASFDAYRHYMAYAASRWPMYPTSQPSNHPVPEPHRIMPITKQATRSRPNLRVIPTVTPDKPKQKESLRGSIPAAQVPVQVSIPSLIRYNPEKISDEKNRASQKQKVIEEREKLKNDREARQKKMYYLRTELERLHKQQGEMLRKKRREKDGHKDPLLVEVSRLQDNIMKDIAELRQEAEEAEKKQSELDKVAQILGINIFDKSQKSLSDSREPTEKPGKAEKSKSPEKVSSFSNSSSNKESKVNNEKFRTKSPKPAESPQSATKQLDQPTAAYEYYDAGNHWCKDCNTICGTMFDFFTHMHNKKHTQTLDPYNRPWASKTQSEAKQDAIKRTDKITVPAKGSEFLVPISGFYCQLCEEFLGDPISGEQHVKGHQHNEKYKKYVDENPLYEERRNLDRQAGLAVVLETERRRQSELKRKLSEKPKEEKKEKKAKAVKEVKEDDKVSEKLEDQLSEGRNSPEKAENKRNTGIKLQLKEEVKKESPTSSSFGKFSWKKPEKEEEKSSLVTPSISKEEILESSKDKEDGKTEAGKAKPIKIKLSGKTVVAHTSPWMPVVTTSTQTKIRPNLPIPSTVLRKSCSATMSKPAPLNTFLSIKSSGTTAKPLPVVKESSADLLLPPDIISKAFGGEEVILKGSPEEKVVLAEKSEPSHLPEQILPPPPPPPPPPPPPPPVIPHPAAPSAAQANAILAPVKSNPVVSQTLSPGFVGPNILNPVLPVAIMASAQPAAIPSDETAPGVSESDRDQTLFSVLVRPPPPLSSVFSEQAKKLEKRNSCLATANAKDLYDIFYSSGGKGAPETKGAPETKLSGGPLANGENSNLSRTKSSDTSSTSPLNSSASQEELHQDEGLVAAPIVSNSEKPIAKTLVALGKWSVVEHVGPKSTGSTYGFLQPLTRLCQSRPYETITPKTDTLAIWTSSSFQSDTSRDISPEKSELDLGEPGPPGVEPPPQLLDIQCKESQKLVEIHLRESVNQDKESQELRKSEDCRESEIETNTELKERVKELSEGIVDEGVSTSIGPHSIDDSNLNHGNRYMWEGEVKQPNLLMIDKEAEQSNKLMTGSETPSKVVIKLSPQACSFTKAKLDSFLSEARSLLNPQDTPVKISAPELLLHSPARSAMCLTGSPQEQGVSVVSEEGLENSAPESASRTSRYRSLKLKRERSKDFQVKKIYELAVWDENKKRPETWESPEKPKTEALELQDVHPELTVTIESKALEDFEATDLKVEELTALGNLGDMPVDFCTTRVSPAHRSPTVLCQKVCEENSVSPIGCNSSDPADFEPIPSFSGFPLDSPKTLVLDFETEGERNSPNPRSVRIPSPNILKTGLTENVDRGLGGLEGTHQALDLLAGGMMPEEVKESSQLDKQESLGLELKTINSAGLGPSPCLPDLVDFVTRTSGVQKDKLCSPLSEPGDPSKCSSLELGPLQLEISNASTTEVAILQVDDDSGDPLNLVKAPVSRSPPREQVIEDNMVPQGMPEQETTVGAIQDHTESSVHN.

2 stretches are compositionally biased toward low complexity: residues 1–12 (MYRSSARSSVSS) and 25–39 (SGRS…ARRS). 2 disordered regions span residues 1 to 140 (MYRS…PGLC) and 164 to 189 (RRRL…LTDD). Residues 1-1092 (MYRSSARSSV…THMHNKKHTQ (1092 aa)) form an interaction with AR region. S40 bears the Phosphoserine mark. A compositionally biased stretch (basic residues) spans 53 to 67 (PARRPRSPSGHRGRR). Phosphoserine occurs at positions 79 and 81. Residues 110-132 (SRGESRADYARDGRGDHPGDSGS) are compositionally biased toward basic and acidic residues. 2 positions are modified to phosphoserine: S136 and S173. The span at 177–188 (NLEDMDRDDLTD) shows a compositional bias: acidic residues. At Y205 the chain carries Phosphotyrosine. Phosphoserine occurs at positions 207 and 214. Disordered regions lie at residues 279-346 (TVKI…DGGG) and 397-416 (LESF…YSGH). Residues 311 to 333 (LDPEFRELDLARRKREEEEERSR) are compositionally biased toward basic and acidic residues. Positions 315-343 (FRELDLARRKREEEEERSRSLSQELVGVD) form a coiled coil. Phosphoserine is present on residues S464, S472, S501, and S527. Disordered stretches follow at residues 514-533 (LADS…DIED) and 540-570 (GDEE…ASSL). Residues K547, K553, K566, and K578 each participate in a glycyl lysine isopeptide (Lys-Gly) (interchain with G-Cter in SUMO2) cross-link. Residues 664 to 683 (FSADRRSSDPHRLESREAHH) show a composition bias toward basic and acidic residues. The tract at residues 664–709 (FSADRRSSDPHRLESREAHHSNTHSPEVSHPHPPSPVDPYLLTKNS) is disordered. A Phosphothreonine modification is found at T842. A coiled-coil region spans residues 876–980 (EKISDEKNRA…SELDKVAQIL (105 aa)). Composition is skewed to basic and acidic residues over residues 922 to 941 (QQGE…KDPL) and 989 to 1012 (QKSL…KSPE). Disordered regions lie at residues 922 to 942 (QQGE…DPLL) and 989 to 1051 (QKSL…TKQL). S1010 is modified (phosphoserine). A compositionally biased stretch (low complexity) spans 1013–1023 (KVSSFSNSSSN). Residues 1024–1034 (KESKVNNEKFR) show a composition bias toward basic and acidic residues. The residue at position 1037 (S1037) is a Phosphoserine. Matrin-type zinc fingers lie at residues 1063–1097 (AGNH…LDPY) and 1136–1166 (FYCQ…KYKK). Composition is skewed to basic and acidic residues over residues 1195 to 1235 (RRQS…KLED), 1242 to 1251 (NSPEKAENKR), 1258 to 1267 (QLKEEVKKES), 1279 to 1288 (KKPEKEEEKS), and 1296 to 1316 (SKEE…EAGK). The segment at 1195-1319 (RRQSELKRKL…GKTEAGKAKP (125 aa)) is disordered. 2 positions are modified to phosphoserine: S1243 and S1267. S1420 is subject to Phosphoserine. Disordered stretches follow at residues 1428–1463 (AEKS…HPAA), 1577–1628 (GKGA…EELH), 1702–1735 (SSFQ…PPQL), and 1753–1775 (ESVN…ESEI). The span at 1440–1462 (ILPPPPPPPPPPPPPPPVIPHPA) shows a compositional bias: pro residues. Residues 1602 to 1623 (SNLSRTKSSDTSSTSPLNSSAS) show a composition bias toward low complexity. Positions 1708-1719 (TSRDISPEKSEL) are enriched in basic and acidic residues. The residue at position 1713 (S1713) is a Phosphoserine. Over residues 1724-1734 (PGPPGVEPPPQ) the composition is skewed to pro residues. The stretch at 1768–1792 (EDCRESEIETNTELKERVKELSEGI) forms a coiled coil. Phosphoserine occurs at positions 1856, 1896, 1971, 2030, 2035, 2091, 2101, 2189, 2192, and 2243. The segment at 2252–2279 (DNMVPQGMPEQETTVGAIQDHTESSVHN) is disordered.

In terms of assembly, homodimer. Heterodimer of isoform 1 and isoform 2. Isoform 1 and isoform 2 interact with AR. As to expression, expressed in endocrine tissue.

It is found in the nucleus. Its function is as follows. Acts as a transcriptional corepressor for AR-mediated transactivation function. May act as a transcriptional regulator during spermatogenesis and, in particular, during meiotic division. Functionally, acts as a transcriptional coactivator for AR-mediated transactivation function. May act as a transcriptional regulator during spermatogenesis and, in particular, during meiotic division. The protein is Zinc finger protein 318 (ZNF318) of Homo sapiens (Human).